The chain runs to 213 residues: Orotate phosphoribosyltransferase (213 aa).

Lysine 26 is a binding site for 5-phospho-alpha-D-ribose 1-diphosphate. 34-35 (FF) serves as a coordination point for orotate. Residues 72–73 (YK), arginine 99, lysine 100, lysine 103, histidine 105, and 124–132 (DDVITAGTA) each bind 5-phospho-alpha-D-ribose 1-diphosphate. 2 residues coordinate orotate: threonine 128 and arginine 156.

It belongs to the purine/pyrimidine phosphoribosyltransferase family. PyrE subfamily. Homodimer. The cofactor is Mg(2+).

The enzyme catalyses orotidine 5'-phosphate + diphosphate = orotate + 5-phospho-alpha-D-ribose 1-diphosphate. It participates in pyrimidine metabolism; UMP biosynthesis via de novo pathway; UMP from orotate: step 1/2. Catalyzes the transfer of a ribosyl phosphate group from 5-phosphoribose 1-diphosphate to orotate, leading to the formation of orotidine monophosphate (OMP). The polypeptide is Orotate phosphoribosyltransferase (Enterobacter sp. (strain 638)).